The sequence spans 543 residues: CTP synthase (543 aa).

The interval 1–267 (MKQTKYIFVT…LSPIAEILDL (267 aa)) is amidoligase domain. Serine 15 contributes to the CTP binding site. A UTP-binding site is contributed by serine 15. Residues 16-21 (SLGKGI) and aspartate 73 each bind ATP. The Mg(2+) site is built by aspartate 73 and glutamate 141. Residues 148-150 (DIE), 188-193 (KTKPTQ), and lysine 224 each bind CTP. UTP-binding positions include 188–193 (KTKPTQ) and lysine 224. Positions 292–543 (KIAFVGKYVD…IKAAINYEDN (252 aa)) constitute a Glutamine amidotransferase type-1 domain. An L-glutamine-binding site is contributed by glycine 354. Cysteine 381 serves as the catalytic Nucleophile; for glutamine hydrolysis. Residues 382–385 (LGMQ), glutamate 405, and arginine 473 each bind L-glutamine. Catalysis depends on residues histidine 516 and glutamate 518.

It belongs to the CTP synthase family. In terms of assembly, homotetramer.

It carries out the reaction UTP + L-glutamine + ATP + H2O = CTP + L-glutamate + ADP + phosphate + 2 H(+). The catalysed reaction is L-glutamine + H2O = L-glutamate + NH4(+). The enzyme catalyses UTP + NH4(+) + ATP = CTP + ADP + phosphate + 2 H(+). It participates in pyrimidine metabolism; CTP biosynthesis via de novo pathway; CTP from UDP: step 2/2. Allosterically activated by GTP, when glutamine is the substrate; GTP has no effect on the reaction when ammonia is the substrate. The allosteric effector GTP functions by stabilizing the protein conformation that binds the tetrahedral intermediate(s) formed during glutamine hydrolysis. Inhibited by the product CTP, via allosteric rather than competitive inhibition. Functionally, catalyzes the ATP-dependent amination of UTP to CTP with either L-glutamine or ammonia as the source of nitrogen. Regulates intracellular CTP levels through interactions with the four ribonucleotide triphosphates. The polypeptide is CTP synthase (Campylobacter jejuni subsp. jejuni serotype O:6 (strain 81116 / NCTC 11828)).